A 329-amino-acid chain; its full sequence is IDS-like terpene synthase 1 (329 aa).

Residues aspartate 79 and aspartate 83 each coordinate Mg(2+).

Belongs to the FPP/GGPP synthase family. Requires Mg(2+) as cofactor.

The catalysed reaction is (2E)-geranyl diphosphate + H2O = linalool + diphosphate. It carries out the reaction (2E,6E)-farnesyl diphosphate + H2O = (6E)-nerolidol + diphosphate. Terpene synthase that shows monoterpene synthase activity and produces linalool, using geranyl diphosphate (GPP) as substrate. Also shows sesquiterpene synthase activity as it is able to convert farnesyl diphosphate (FPP) into (E)-nerolidol. The sequence is that of IDS-like terpene synthase 1 from Melampsora lini (Rust fungus).